The following is a 202-amino-acid chain: Small ribosomal subunit protein uS4 (202 aa).

Positions 1 to 13 (MSRYRGPRLRITR) are enriched in basic residues. The tract at residues 1–43 (MSRYRGPRLRITRRLGDLPGLTRKAAKRSHPPGQHGQARRKRS) is disordered. The S4 RNA-binding domain occupies 90–152 (NRLDNVCFRL…KASKQLAQAN (63 aa)).

Belongs to the universal ribosomal protein uS4 family. In terms of assembly, part of the 30S ribosomal subunit. Contacts protein S5. The interaction surface between S4 and S5 is involved in control of translational fidelity.

Functionally, one of the primary rRNA binding proteins, it binds directly to 16S rRNA where it nucleates assembly of the body of the 30S subunit. With S5 and S12 plays an important role in translational accuracy. The polypeptide is Small ribosomal subunit protein uS4 (Prochlorococcus marinus (strain NATL2A)).